We begin with the raw amino-acid sequence, 125 residues long: Oxytocin-neurophysin 1 (125 aa).

The first 19 residues, 1 to 19, serve as a signal peptide directing secretion; that stretch reads MAGSSLACCLLGLLALTSA. A disulfide bridge links cysteine 20 with cysteine 25. Glycine amide is present on glycine 28. 7 disulfides stabilise this stretch: cysteine 41-cysteine 85, cysteine 44-cysteine 58, cysteine 52-cysteine 75, cysteine 59-cysteine 65, cysteine 92-cysteine 104, cysteine 98-cysteine 116, and cysteine 105-cysteine 110.

It belongs to the vasopressin/oxytocin family. As to quaternary structure, interacts with oxytocin receptor (Ki=1.5 nM). Interacts with vasopressin V1aR/AVPR1A (Ki=37 nM), V1bR/AVPR1B (Ki=222 nM), and V2R/AVPR2 receptors (Ki=823 nM).

Functionally, neurophysin 1 specifically binds oxytocin. Its function is as follows. Oxytocin causes contraction of the smooth muscle of the uterus and of the mammary gland. Acts by binding to oxytocin receptor (OXTR). This Ovis aries (Sheep) protein is Oxytocin-neurophysin 1 (OXT).